The chain runs to 55 residues: Large ribosomal subunit protein bL33 (55 aa).

The protein belongs to the bacterial ribosomal protein bL33 family.

The sequence is that of Large ribosomal subunit protein bL33 from Sinorhizobium medicae (strain WSM419) (Ensifer medicae).